The primary structure comprises 431 residues: Histidinol dehydrogenase (431 aa).

3 residues coordinate NAD(+): Y127, Q189, and N212. Residues S237, Q259, and H262 each contribute to the substrate site. Q259 and H262 together coordinate Zn(2+). Active-site proton acceptor residues include E326 and H327. Residues H327, D360, E414, and H419 each contribute to the substrate site. Residue D360 coordinates Zn(2+). H419 provides a ligand contact to Zn(2+).

This sequence belongs to the histidinol dehydrogenase family. Zn(2+) is required as a cofactor.

The catalysed reaction is L-histidinol + 2 NAD(+) + H2O = L-histidine + 2 NADH + 3 H(+). The protein operates within amino-acid biosynthesis; L-histidine biosynthesis; L-histidine from 5-phospho-alpha-D-ribose 1-diphosphate: step 9/9. Its function is as follows. Catalyzes the sequential NAD-dependent oxidations of L-histidinol to L-histidinaldehyde and then to L-histidine. The polypeptide is Histidinol dehydrogenase (Xylella fastidiosa (strain Temecula1 / ATCC 700964)).